Consider the following 457-residue polypeptide: Argininosuccinate lyase (457 aa).

The protein belongs to the lyase 1 family. Argininosuccinate lyase subfamily.

It localises to the cytoplasm. It carries out the reaction 2-(N(omega)-L-arginino)succinate = fumarate + L-arginine. It functions in the pathway amino-acid biosynthesis; L-arginine biosynthesis; L-arginine from L-ornithine and carbamoyl phosphate: step 3/3. This Klebsiella pneumoniae subsp. pneumoniae (strain ATCC 700721 / MGH 78578) protein is Argininosuccinate lyase.